Reading from the N-terminus, the 181-residue chain is Sodium/potassium-transporting ATPase subunit beta-1-interacting protein 3 (181 aa).

4 helical membrane passes run 5–22 (TGRCTLIFICTLQMLVAL), 35–55 (APILGNFLHIIVVILGLFGTI), 62–82 (IVAYTIWTAFWVAWNVFIICF), and 151–171 (AVQILLSLIGFVYACYVISVI).

The protein belongs to the NKAIN family. As to quaternary structure, interacts with atp1b1 C-terminus.

Its subcellular location is the cell membrane. In Xenopus tropicalis (Western clawed frog), this protein is Sodium/potassium-transporting ATPase subunit beta-1-interacting protein 3 (nkain3).